The chain runs to 772 residues: Endoplasmic reticulum membrane sensor NFE2L1 (772 aa).

A helical; Signal-anchor for type II membrane protein transmembrane segment spans residues tyrosine 7 to valine 24. The interval aspartate 108–glycine 148 is disordered. The segment covering valine 113 to glutamine 131 has biased composition (polar residues). The tract at residues valine 191–lysine 199 is cholesterol recognition/amino acid consensus (CRAC) region. Residue asparagine 348 is glycosylated (N-linked (GlcNAc...) asparagine). The tract at residues serine 379 to glutamate 383 is CPD. N-linked (GlcNAc...) asparagine glycosylation is found at asparagine 412 and asparagine 423. The tract at residues glutamate 470–threonine 532 is disordered. The Destruction motif signature appears at aspartate 476–serine 480. Low complexity predominate over residues aspartate 476–alanine 523. Serine 528 carries the post-translational modification Phosphoserine; by CK2. The residue at position 599 (serine 599) is a Phosphoserine; by PKA. Residues leucine 654–leucine 717 form the bZIP domain. The segment at arginine 656–lysine 675 is basic motif. The tract at residues leucine 682–leucine 696 is leucine-zipper. The interval arginine 753 to lysine 772 is disordered. A Nuclear localization signal motif is present at residues arginine 761–lysine 768. Residues glutamine 763–lysine 772 are compositionally biased toward basic residues.

The protein belongs to the bZIP family. CNC subfamily. In terms of assembly, interacts with KEAP1. Interacts (via CPD region) with FBXW7; leading to its ubiquitination and degradation. Interacts with SYVN1/HRD1; leading to its ubiquitination and degradation. Interacts (when ubiquitinated) with DDI2; leading to its cleavage. As to quaternary structure, interacts (via the bZIP domain) with small MAF protein (MAFF, MAFG or MAFK); required for binding to antioxidant response elements (AREs) on DNA. Interacts (via Destruction motif) with BTRC; leading to its ubiquitination and degradation. Interacts with CEBPB; the heterodimer represses expression of DSPP during odontoblast differentiation. Interacts with MOTS-c, a peptide produced by the mitochondrially encoded 12S rRNA MT-RNR1. In terms of processing, cleaved at Leu-104 by the aspartyl protease DDI2 following retrotranslocation, releasing the protein from the endoplasmic reticulum membrane and forming the transcription factor NRF1 that translocates into the nucleus. Ubiquitination is prerequisite for cleavage by aspartyl protease DDI2. Post-translationally, N-glycosylated in normal conditions, when it has a single-pass type II membrane protein topology, with the DNA-binding domain facing the endoplasmic reticulum lumen. Deglycosylated during retrotranslocation to the cytosolic side of the membrane, to have a single-pass type III membrane protein topology with the major part of the protein facing the cytosol. Ubiquitinated by the SCF(FBXW7) complex and SYVN1/HRD1, leading to its degradation by the proteasome. Ubiquitinated during retrotranslocation to the cytosolic side of the membrane: ubiquitination does not lead to degradation and is required for processing by the aspartyl protease DDI2 and subsequent release from the endoplasmic reticulum membrane. In terms of processing, phosphorylation by CK2 at Ser-528 inhibits transcription factor activity, possibly by affecting DNA-binding activity. Phosphorylation at Ser-599 is required for interaction with CEBPB. Post-translationally, ubiquitinated by the SCF(BTRC) complex in the nucleus, leading to its degradation by the proteasome.

It localises to the endoplasmic reticulum membrane. The protein resides in the nucleus. In terms of biological role, endoplasmic reticulum membrane sensor that translocates into the nucleus in response to various stresses to act as a transcription factor. Constitutes a precursor of the transcription factor NRF1. Able to detect various cellular stresses, such as cholesterol excess, oxidative stress or proteasome inhibition. In response to stress, it is released from the endoplasmic reticulum membrane following cleavage by the protease DDI2 and translocates into the nucleus to form the transcription factor NRF1. Acts as a key sensor of cholesterol excess: in excess cholesterol conditions, the endoplasmic reticulum membrane form of the protein directly binds cholesterol via its CRAC motif, preventing cleavage and release of the transcription factor NRF1, thereby allowing expression of genes promoting cholesterol removal, such as CD36. Involved in proteasome homeostasis: in response to proteasome inhibition, it is released from the endoplasmic reticulum membrane, translocates to the nucleus and activates expression of genes encoding proteasome subunits. Its function is as follows. CNC-type bZIP family transcription factor that translocates to the nucleus and regulates expression of target genes in response to various stresses. Heterodimerizes with small-Maf proteins (MAFF, MAFG or MAFK) and binds DNA motifs including the antioxidant response elements (AREs), which regulate expression of genes involved in oxidative stress response. Activates or represses expression of target genes, depending on the context. Plays a key role in cholesterol homeostasis by acting as a sensor of cholesterol excess: in low cholesterol conditions, translocates into the nucleus and represses expression of genes involved in defense against cholesterol excess, such as CD36. In excess cholesterol conditions, the endoplasmic reticulum membrane form of the protein directly binds cholesterol via its CRAC motif, preventing cleavage and release of the transcription factor NRF1, thereby allowing expression of genes promoting cholesterol removal. Critical for redox balance in response to oxidative stress: acts by binding the AREs motifs on promoters and mediating activation of oxidative stress response genes, such as GCLC, GCLM, GSS, MT1 and MT2. Plays an essential role during fetal liver hematopoiesis: probably has a protective function against oxidative stress and is involved in lipid homeostasis in the liver. Involved in proteasome homeostasis: in response to proteasome inhibition, mediates the 'bounce-back' of proteasome subunits by translocating into the nucleus and activating expression of genes encoding proteasome subunits. Also involved in regulating glucose flux. Together with CEBPB; represses expression of DSPP during odontoblast differentiation. In response to ascorbic acid induction, activates expression of SP7/Osterix in osteoblasts. This Pongo abelii (Sumatran orangutan) protein is Endoplasmic reticulum membrane sensor NFE2L1.